Here is a 258-residue protein sequence, read N- to C-terminus: Na(+)-translocating NADH-quinone reductase subunit C (258 aa).

The chain crosses the membrane as a helical span at residues 14–34 (LIVVLAVSLICSVIVAGAVVG). FMN phosphoryl serine is present on S226.

Belongs to the NqrC family. In terms of assembly, composed of six subunits; NqrA, NqrB, NqrC, NqrD, NqrE and NqrF. FMN is required as a cofactor.

It is found in the cell inner membrane. It catalyses the reaction a ubiquinone + n Na(+)(in) + NADH + H(+) = a ubiquinol + n Na(+)(out) + NAD(+). Functionally, NQR complex catalyzes the reduction of ubiquinone-1 to ubiquinol by two successive reactions, coupled with the transport of Na(+) ions from the cytoplasm to the periplasm. NqrA to NqrE are probably involved in the second step, the conversion of ubisemiquinone to ubiquinol. The sequence is that of Na(+)-translocating NADH-quinone reductase subunit C from Neisseria meningitidis serogroup A / serotype 4A (strain DSM 15465 / Z2491).